The sequence spans 364 residues: MKMSFRWYGKHDPVSLEEIKAIPGMQGIVTAVYDVPVGQAWPLENILELKRTVEAAGLEISVIESIPVHEDIKQGKPNRDELIENYKTSISNVGKAGIPVVCYNFMPVFDWTRSDLNYPLPDGSTSLAFLKADLADVDPVADDLNLPGWDSSYSKEEMKAIIEHYRHHISEEDLWANLDYFIKAIMPTAEAAGVKMAIHPDDPPYGIFGLPRIITGQKAVERFLDLYDSPNNGITMCVGSYASDPQNDVIAMTEYALKRQRINFMHTRNVTAGDWGFQETAHLSQAGDIDMNAIIKLLVDYDWQGPLRPDHGRRIWGDQTKTPGYGLYDRALGATYFNGLYEANMRAAGKTPDFGITVKTVGDK.

This sequence belongs to the mannonate dehydratase family. The cofactor is Fe(2+). Mn(2+) serves as cofactor.

It catalyses the reaction D-mannonate = 2-dehydro-3-deoxy-D-gluconate + H2O. The protein operates within carbohydrate metabolism; pentose and glucuronate interconversion. In terms of biological role, catalyzes the dehydration of D-mannonate. In Streptococcus equi subsp. zooepidemicus (strain MGCS10565), this protein is Mannonate dehydratase.